We begin with the raw amino-acid sequence, 417 residues long: Argininosuccinate synthase (417 aa).

Residue 9 to 17 (AYSGGLDTS) participates in ATP binding. Y87 is an L-citrulline binding site. G117 is an ATP binding site. T119, N123, and D124 together coordinate L-aspartate. N123 lines the L-citrulline pocket. L-citrulline contacts are provided by R127, S175, S184, E260, and Y272.

It belongs to the argininosuccinate synthase family. Type 1 subfamily. Homotetramer.

The protein localises to the cytoplasm. The enzyme catalyses L-citrulline + L-aspartate + ATP = 2-(N(omega)-L-arginino)succinate + AMP + diphosphate + H(+). Its pathway is amino-acid biosynthesis; L-arginine biosynthesis; L-arginine from L-ornithine and carbamoyl phosphate: step 2/3. The sequence is that of Argininosuccinate synthase from Oceanobacillus iheyensis (strain DSM 14371 / CIP 107618 / JCM 11309 / KCTC 3954 / HTE831).